Reading from the N-terminus, the 304-residue chain is Nucleotide-binding protein RHA1_ro07174 (304 aa).

24 to 31 (GLSGAGLQ) contacts ATP. Position 75-78 (75-78 (DVRS)) interacts with GTP.

This sequence belongs to the RapZ-like family.

Its function is as follows. Displays ATPase and GTPase activities. This Rhodococcus jostii (strain RHA1) protein is Nucleotide-binding protein RHA1_ro07174.